A 438-amino-acid chain; its full sequence is DNA polymerase IV 1 (438 aa).

Residues 46 to 226 (LAHIDCDAFY…KPVTMIWGVG (181 aa)) enclose the UmuC domain. Mg(2+) contacts are provided by D50 and D143. E144 is a catalytic residue.

The protein belongs to the DNA polymerase type-Y family. In terms of assembly, monomer. Requires Mg(2+) as cofactor.

It is found in the cytoplasm. It carries out the reaction DNA(n) + a 2'-deoxyribonucleoside 5'-triphosphate = DNA(n+1) + diphosphate. In terms of biological role, poorly processive, error-prone DNA polymerase involved in untargeted mutagenesis. Copies undamaged DNA at stalled replication forks, which arise in vivo from mismatched or misaligned primer ends. These misaligned primers can be extended by PolIV. Exhibits no 3'-5' exonuclease (proofreading) activity. May be involved in translesional synthesis, in conjunction with the beta clamp from PolIII. The protein is DNA polymerase IV 1 (dinB1) of Mesorhizobium japonicum (strain LMG 29417 / CECT 9101 / MAFF 303099) (Mesorhizobium loti (strain MAFF 303099)).